The following is a 133-amino-acid chain: Small ribosomal subunit protein uS8 (133 aa).

Belongs to the universal ribosomal protein uS8 family. Part of the 30S ribosomal subunit. Contacts proteins S5 and S12.

Its function is as follows. One of the primary rRNA binding proteins, it binds directly to 16S rRNA central domain where it helps coordinate assembly of the platform of the 30S subunit. The protein is Small ribosomal subunit protein uS8 of Nostoc punctiforme (strain ATCC 29133 / PCC 73102).